Here is a 320-residue protein sequence, read N- to C-terminus: Ferrochelatase (320 aa).

Residues His194 and Glu275 each contribute to the Fe cation site.

This sequence belongs to the ferrochelatase family.

The protein localises to the cytoplasm. The catalysed reaction is heme b + 2 H(+) = protoporphyrin IX + Fe(2+). Its pathway is porphyrin-containing compound metabolism; protoheme biosynthesis; protoheme from protoporphyrin-IX: step 1/1. In terms of biological role, catalyzes the ferrous insertion into protoporphyrin IX. In Stenotrophomonas maltophilia (strain R551-3), this protein is Ferrochelatase.